We begin with the raw amino-acid sequence, 267 residues long: Corrinoid adenosyltransferase EutT (267 aa).

2 residues coordinate a divalent metal cation: Cys-80 and Cys-83.

It belongs to the Cob(I)alamin adenosyltransferase family. EutT subfamily. As to quaternary structure, homodimer. It depends on a divalent metal cation as a cofactor.

It localises to the bacterial microcompartment. The enzyme catalyses 2 cob(II)alamin + reduced [electron-transfer flavoprotein] + 2 ATP + 2 H2O = 2 adenosylcob(III)alamin + oxidized [electron-transfer flavoprotein] + 2 phosphate + 2 diphosphate + 3 H(+). It catalyses the reaction 2 cob(II)inamide + reduced [electron-transfer flavoprotein] + 2 ATP + 2 H2O = 2 adenosylcob(III)inamide + oxidized [electron-transfer flavoprotein] + 2 phosphate + 2 diphosphate + 3 H(+). Its pathway is amine and polyamine degradation; ethanolamine degradation. Its function is as follows. Converts cyanocobalamin (CN-B12) to adenosylcobalamin (AdoCbl), the inducer of the eut operon. Is not active on cobinamide nor other intermediates in the adenosylcobalamin synthetic pathway. Allows full induction of the eut operon. Can use ADP, CTP and dATP in place of ATP, and cobinamide in place of cobalamin, none are as efficiently used as ATP and cobalamin. In terms of biological role, expression of the eut operon allows this bacteria to use ethanolamine (EA) as a carbon, nitrogen and energy source. It relies on cobalamin (vitamin B12) both as a cofactor for the ethanolamine ammonia-lyase (EAL) activity and to induce the operon. EA enhances bacterial survival in macrophages in a concentration-dependent manner, suggesting it is an important nutrient during infection. The protein is Corrinoid adenosyltransferase EutT of Salmonella typhimurium (strain LT2 / SGSC1412 / ATCC 700720).